The sequence spans 166 residues: Lipoprotein signal peptidase (166 aa).

Helical transmembrane passes span 9 to 29, 45 to 65, 71 to 91, and 100 to 120; these read ASGA…FDQL, ALTS…FGFL, WQRW…CFLL, and FSLS…DRLV. Residues D126 and D144 contribute to the active site. The chain crosses the membrane as a helical span at residues 135–155; sequence WHFPAFNLADSAITIGAVLLI.

The protein belongs to the peptidase A8 family.

The protein resides in the cell inner membrane. It carries out the reaction Release of signal peptides from bacterial membrane prolipoproteins. Hydrolyzes -Xaa-Yaa-Zaa-|-(S,diacylglyceryl)Cys-, in which Xaa is hydrophobic (preferably Leu), and Yaa (Ala or Ser) and Zaa (Gly or Ala) have small, neutral side chains.. It participates in protein modification; lipoprotein biosynthesis (signal peptide cleavage). Functionally, this protein specifically catalyzes the removal of signal peptides from prolipoproteins. This is Lipoprotein signal peptidase from Burkholderia multivorans (strain ATCC 17616 / 249).